The following is a 316-amino-acid chain: Nucleoprotein (316 aa).

RNA-binding residues include Tyr43, Tyr46, Val76, Arg122, and Lys240.

It belongs to the tenuiviruses nucleocapsid protein family.

It is found in the virion. The protein localises to the host cytoplasm. Encapsidates the genome, protecting it from nucleases. The encapsidated genomic RNA is termed the nucleocapsid (NC), and serves as template for viral transcription and replication. This chain is Nucleoprotein, found in Maize stripe virus (MStV).